The chain runs to 187 residues: Basic helix-loop-helix transcription factor scleraxis (187 aa).

Disordered stretches follow at residues 21–83 and 140–163; these read LSED…TNSV and AFFHHGGGGGSPPPRDSENSQPKQ. Residues 34-43 show a composition bias toward basic and acidic residues; sequence SDEKPFHLDA. Basic residues predominate over residues 50–72; it reads AGKRRSGKKAGRLHREPRQRHTA. Residues 67-119 enclose the bHLH domain; it reads RQRHTANARERDRTNSVNTAFTALRTLIPTEPADRKLSKIETLRLASSYISHL.

As to quaternary structure, efficient DNA binding requires dimerization with another bHLH protein. Dimerizes and binds the E-box consensus sequence with E12. In terms of tissue distribution, expressed in the intersomitic, the superficial proximomedial limb mesenchyme and the subectodermal mesenchyme.

It is found in the nucleus. In terms of biological role, plays an early essential role in mesoderm formation, as well as a later role in formation of somite-derived chondrogenic lineages. The protein is Basic helix-loop-helix transcription factor scleraxis (SCX) of Gallus gallus (Chicken).